Reading from the N-terminus, the 576-residue chain is Tudor and KH domain-containing protein homolog (576 aa).

Positions 40-60 are disordered; the sequence is EEADSGGQRPASGIRGQTEEQ. KH domains are found at residues 65–127 and 136–199; these read EVCL…RALL and VVKV…RKML. The segment covering 209 to 224 has biased composition (basic and acidic residues); sequence LVRSMEEVEQRREPRR. The interval 209–253 is disordered; the sequence is LVRSMEEVEQRREPRRSPTNSIASSMYSSQTSLSSHTQPRDKLMA. Over residues 232–243 the composition is skewed to low complexity; sequence SSMYSSQTSLSS. Residues 310 to 375 enclose the Tudor domain; it reads APYVGQIVAA…CELRTDFLTL (66 aa). Residues 556–576 form a disordered region; sequence ATDLENGNNNNASTTNGASAH. Positions 561 to 576 are enriched in low complexity; it reads NGNNNNASTTNGASAH.

It belongs to the Tdrkh family. Interacts (via C-terminus) with AGO3 (via the N-terminal region when symmetrically methylated on arginine residues); this interaction is RNA-independent and may be required for AGO3 localization to the nuage. Interacts (via Tudor domain) with piwi (via N-terminus). Interacts with tral and me31B. Ovaries (at protein level). Expressed in the ovary and testis.

It is found in the cytoplasm. Its subcellular location is the nucleus. It localises to the cytoplasmic ribonucleoprotein granule. Functionally, involved in the piwi-interacting RNA (piRNA) metabolic process, which mediates the repression of transposable elements during meiosis by forming complexes composed of piRNAs and Piwi proteins, and governs the methylation and subsequent repression of transposons which is essential for germline integrity. Likely to act by recruiting Piwi proteins such as AGO3 and piwi to the piRNA biogenesis machinery in the nuage. Required for the final steps of primary piRNA biogenesis by participating in the 3' end-trimming of piwi-bound intermediates into mature piRNAs. This is Tudor and KH domain-containing protein homolog from Drosophila melanogaster (Fruit fly).